The sequence spans 232 residues: Phosphatidylserine decarboxylase proenzyme (232 aa).

Ser190 acts as the Schiff-base intermediate with substrate; via pyruvic acid in catalysis. Ser190 carries the pyruvic acid (Ser); by autocatalysis modification.

It belongs to the phosphatidylserine decarboxylase family. PSD-A subfamily. Heterodimer of a large membrane-associated beta subunit and a small pyruvoyl-containing alpha subunit. Requires pyruvate as cofactor. In terms of processing, is synthesized initially as an inactive proenzyme. Formation of the active enzyme involves a self-maturation process in which the active site pyruvoyl group is generated from an internal serine residue via an autocatalytic post-translational modification. Two non-identical subunits are generated from the proenzyme in this reaction, and the pyruvate is formed at the N-terminus of the alpha chain, which is derived from the carboxyl end of the proenzyme. The post-translation cleavage follows an unusual pathway, termed non-hydrolytic serinolysis, in which the side chain hydroxyl group of the serine supplies its oxygen atom to form the C-terminus of the beta chain, while the remainder of the serine residue undergoes an oxidative deamination to produce ammonia and the pyruvoyl prosthetic group on the alpha chain.

The protein resides in the cell membrane. It carries out the reaction a 1,2-diacyl-sn-glycero-3-phospho-L-serine + H(+) = a 1,2-diacyl-sn-glycero-3-phosphoethanolamine + CO2. It functions in the pathway phospholipid metabolism; phosphatidylethanolamine biosynthesis; phosphatidylethanolamine from CDP-diacylglycerol: step 2/2. Functionally, catalyzes the formation of phosphatidylethanolamine (PtdEtn) from phosphatidylserine (PtdSer). The sequence is that of Phosphatidylserine decarboxylase proenzyme from Bartonella henselae (strain ATCC 49882 / DSM 28221 / CCUG 30454 / Houston 1) (Rochalimaea henselae).